We begin with the raw amino-acid sequence, 619 residues long: Sodium-dependent dopamine transporter (619 aa).

Residues 1–56 lie on the Cytoplasmic side of the membrane; the sequence is MSKSKCSVGPMSSVVAPAKEPNAVGPREVELILVKEQNGVQLTNSTLINPPQTPVE. A discontinuously helical transmembrane segment spans residues 57-95; that stretch reads VQERETWSKKIDFLLSVIGFAVDLANVWRFPYLCYKNGG. Na(+) is bound by residues Gly-75, Ala-77, Val-78, Asp-79, and Asn-82. Asp-79 lines the dopamine pocket. 2 helical membrane passes run 96 to 127 and 128 to 171; these read GAFLVPYLLFMVIAGMPLFYMELALGQFNREG and AAGV…FSSF. Residues Ser-149 and Gly-153 each coordinate dopamine. The Extracellular segment spans residues 172–235; it reads TMDLPWIHCN…SRGIDDLGPP (64 aa). The cysteines at positions 180 and 189 are disulfide-linked. N-linked (GlcNAc...) asparagine glycans are attached at residues Asn-181, Asn-188, Asn-196, and Asn-204. 2 helical membrane passes run 236–255 and 256–286; these read RWQLTACLVLVIVLLYFSLW and KGVKTSGKVVWITATMPYVVLTALLLRGVTL. Over 287 to 305 the chain is Extracellular; the sequence is PGAMDGIRAYLSVDFYRLC. The discontinuously helical transmembrane segment at 306-334 threads the bilayer; the sequence is EASVWIDAATQVCFSLGVGFGVLIAFSSY. A chloride-binding site is contributed by Gln-316. Phe-319 serves as a coordination point for dopamine. Positions 320 and 352 each coordinate Na(+). Residue Ser-320 participates in chloride binding. Residues 335 to 375 traverse the membrane as a helical segment; the sequence is NKFTNNCYRDAIITTSINSLTSFSSGFVVFSFLGYMAQKHN. Chloride is bound at residue Ser-356. Residues 376 to 399 are Extracellular-facing; it reads VPIRDVATDGPGLIFIIYPEAIAT. The next 3 membrane-spanning stretches (helical) occupy residues 400–441, 442–465, and 466–498; these read LPLS…QLLH, RHRELFTLGIVLATFLLSLFCVTN, and GGIYVFTLLDHFAAGTSILFGVLIEAIGVAWFY. The Na(+) site is built by Leu-417, Asp-420, and Ser-421. Dopamine-binding residues include Ser-421 and Ala-422. Residues 499-515 are Cytoplasmic-facing; the sequence is GVQQFSDDIKQMTGQRP. The helical transmembrane segment at 516-541 threads the bilayer; the sequence is NLYWRLCWKLVSPCFLLYVVVVSIVT. Residues 542–552 lie on the Extracellular side of the membrane; sequence FRPPHYGAYIF. The helical transmembrane segment at 553-582 threads the bilayer; sequence PDWANALGWIIATSSMAMVPIYATYKFCSL. The segment at 560–589 is interaction with TGFB1I1; that stretch reads GWIIATSSMAMVPIYATYKFCSLPGSFREK. Residues 583 to 619 are Cytoplasmic-facing; it reads PGSFREKLAYAITPEKDRQLVDRGEVRQFTLRHWLLV.

This sequence belongs to the sodium:neurotransmitter symporter (SNF) (TC 2.A.22) family. SLC6A3 subfamily. Monomer. Homooligomer; disulfide-linked. Interacts with PRKCABP and TGFB1I1. Interacts (via N-terminus) with SYNGR3 (via N-terminus). Interacts with SLC18A2. Interacts with TOR1A (ATP-bound); TOR1A regulates SLC6A3 subcellular location. Interacts with alpha-synuclein/SNCA. Interacts with SEPTIN4. In terms of tissue distribution, found in the substantia nigra and ventral tegmental dopamine neurons, in fibers of the medial forebrain bundle ascending into the striatum, and within dense fiber networks and varicosities in the dorsal and ventral striatum (at protein level). Lower expression in the cortex (at protein level). Absent from the corpus callosum. Expressed throughout the retina at postnatal day 8.

The protein resides in the cell membrane. Its subcellular location is the cell projection. It localises to the neuron projection. The protein localises to the axon. The enzyme catalyses dopamine(out) + chloride(out) + Na(+)(out) = dopamine(in) + chloride(in) + Na(+)(in). It carries out the reaction (R)-noradrenaline(out) + chloride(out) + Na(+)(out) = (R)-noradrenaline(in) + chloride(in) + Na(+)(in). The catalysed reaction is dopamine(out) + chloride(out) + 2 Na(+)(out) = dopamine(in) + chloride(in) + 2 Na(+)(in). With respect to regulation, inhibited by amphetamine, bupropion, cocaine and ritalin. Inhibited by zinc ions. In terms of biological role, mediates sodium- and chloride-dependent transport of dopamine. Also mediates sodium- and chloride-dependent transport of norepinephrine (also known as noradrenaline). Regulator of light-dependent retinal hyaloid vessel regression, downstream of OPN5 signaling. The chain is Sodium-dependent dopamine transporter (Slc6a3) from Mus musculus (Mouse).